The sequence spans 385 residues: S-adenosylmethionine synthase (385 aa).

His-16 provides a ligand contact to ATP. Asp-18 contacts Mg(2+). Glu-44 is a K(+) binding site. Residues Glu-57 and Gln-100 each coordinate L-methionine. Positions 100–110 (QSPDINQGVDR) are flexible loop. ATP-binding positions include 164-166 (DGK), 230-231 (KF), Asp-239, 245-246 (RK), Ala-262, and Lys-266. L-methionine is bound at residue Asp-239. Lys-270 lines the L-methionine pocket.

This sequence belongs to the AdoMet synthase family. Homotetramer; dimer of dimers. Requires Mg(2+) as cofactor. K(+) serves as cofactor.

Its subcellular location is the cytoplasm. The catalysed reaction is L-methionine + ATP + H2O = S-adenosyl-L-methionine + phosphate + diphosphate. It participates in amino-acid biosynthesis; S-adenosyl-L-methionine biosynthesis; S-adenosyl-L-methionine from L-methionine: step 1/1. Its function is as follows. Catalyzes the formation of S-adenosylmethionine (AdoMet) from methionine and ATP. The overall synthetic reaction is composed of two sequential steps, AdoMet formation and the subsequent tripolyphosphate hydrolysis which occurs prior to release of AdoMet from the enzyme. This Helicobacter pylori (strain ATCC 700392 / 26695) (Campylobacter pylori) protein is S-adenosylmethionine synthase.